A 271-amino-acid polypeptide reads, in one-letter code: Formamidopyrimidine-DNA glycosylase (271 aa).

The active-site Schiff-base intermediate with DNA is Pro-2. The active-site Proton donor is Glu-3. Catalysis depends on Lys-58, which acts as the Proton donor; for beta-elimination activity. Positions 92, 111, and 152 each coordinate DNA. The FPG-type zinc finger occupies 237–271 (MVYGREGQACKHCGRELKHATIGQRATVWCAACQR). Arg-261 serves as the catalytic Proton donor; for delta-elimination activity.

This sequence belongs to the FPG family. In terms of assembly, monomer. Requires Zn(2+) as cofactor.

It carries out the reaction Hydrolysis of DNA containing ring-opened 7-methylguanine residues, releasing 2,6-diamino-4-hydroxy-5-(N-methyl)formamidopyrimidine.. The enzyme catalyses 2'-deoxyribonucleotide-(2'-deoxyribose 5'-phosphate)-2'-deoxyribonucleotide-DNA = a 3'-end 2'-deoxyribonucleotide-(2,3-dehydro-2,3-deoxyribose 5'-phosphate)-DNA + a 5'-end 5'-phospho-2'-deoxyribonucleoside-DNA + H(+). Its function is as follows. Involved in base excision repair of DNA damaged by oxidation or by mutagenic agents. Acts as a DNA glycosylase that recognizes and removes damaged bases. Has a preference for oxidized purines, such as 7,8-dihydro-8-oxoguanine (8-oxoG). Has AP (apurinic/apyrimidinic) lyase activity and introduces nicks in the DNA strand. Cleaves the DNA backbone by beta-delta elimination to generate a single-strand break at the site of the removed base with both 3'- and 5'-phosphates. This is Formamidopyrimidine-DNA glycosylase from Xanthomonas campestris pv. campestris (strain B100).